A 446-amino-acid chain; its full sequence is Methionine aminopeptidase 2-1 (446 aa).

The interval 1 to 88 (MAAQVTPELA…PPRVILSSIF (88 aa)) is disordered. Residues 32 to 44 (ENEDVESDDDNEG) show a composition bias toward acidic residues. Residues 57-72 (AKKKKKKKPKKKKKGG) are compositionally biased toward basic residues. Substrate is bound at residue H196. Residues D216, D227, and H296 each coordinate a divalent metal cation. Residue H304 participates in substrate binding. 2 residues coordinate a divalent metal cation: E332 and E427.

This sequence belongs to the peptidase M24A family. Methionine aminopeptidase eukaryotic type 2 subfamily. The cofactor is Co(2+). Zn(2+) is required as a cofactor. Mn(2+) serves as cofactor. Requires Fe(2+) as cofactor.

It localises to the cytoplasm. The enzyme catalyses Release of N-terminal amino acids, preferentially methionine, from peptides and arylamides.. Its function is as follows. Cotranslationally removes the N-terminal methionine from nascent proteins. The N-terminal methionine is often cleaved when the second residue in the primary sequence is small and uncharged (Met-Ala-, Cys, Gly, Pro, Ser, Thr, or Val). This is Methionine aminopeptidase 2-1 from Blastomyces gilchristii (strain SLH14081) (Blastomyces dermatitidis).